A 354-amino-acid chain; its full sequence is Stimulator of interferon genes protein 3 (354 aa).

Helical transmembrane passes span 20–40 (VTFA…FALW), 48–68 (INFV…GELI), 101–121 (YGSC…YALL), and 132–152 (YGIF…IVGI). Positions 178, 183, 250, 251, 253, 272, 275, and 276 each coordinate 3',3'-cGAMP.

The protein belongs to the STING family.

The protein localises to the membrane. Facilitator of innate immune signaling that acts as a sensor of second messenger signals produced by cyclic GMP-AMP synthase-like receptors (cGLRs) and promotes the production of type I interferon. Innate immune response is triggered in response to nucleotides from viruses and bacteria delivered to the cytoplasm. Acts by binding cyclic dinucleotides: recognizes and binds cyclic 3'-3' linked cGAMP (3'-3'-cGAMP), cyclic di-AMP (3',3'-c-di-AMP) and cyclic di-GMP (3',3'-c-di-GMP) second messengers produced by cGLRs in response to nucleotides in the cytosol, such as double-stranded RNA (dsRNA). Upon binding to 3'-3'-cGAMP, 3',3'-c-di-AMP or 3',3'-c-di-GMP, oligomerizes and promotes the recruitment and subsequent activation of the transcription factor IRF3 to induce expression of type I interferon. The chain is Stimulator of interferon genes protein 3 from Stylophora pistillata (Smooth cauliflower coral).